We begin with the raw amino-acid sequence, 440 residues long: MSAPKKLYIKTYGCQMNVYDSERMAETLGGQGYVETQTPDDADMILLNTCHIREKAAEKVYSELGRFKGLKAEKPDLKIGVAGCVAQAEGEEIMRRQPLVDLVVGPQSYHRLPEMEAKAGTGEKVLDTDFPEEDKFEKLKRRPKAKRGPTAFLTVQEGCDKFCAFCVVPYTRGAEVSRPVDRVLREAEDLVERGVREITLLGQNVNAYHGAGPNGDMTLAQLIWELDKIDGLERIRFTTSHPNDMMDDLIEAHGTCKKLMPYLHLPVQAGSDKILKRMNRSHTAESYIRLIERIRAARPDILISGDFIVGFPEETEEDFQATLDLVEEVKYGTAYSFKYSTRPGTPAAERAQVDPKEADDRLQRLQAVLTRQQREVQDSMVGRELGVLFEKAGRFAGQMVGKSDYLHAVHVADCDAKIGDLRRVRIVSSGANSLAGELID.

Residues 5-121 (KKLYIKTYGC…LPEMEAKAGT (117 aa)) form the MTTase N-terminal domain. Residues Cys14, Cys50, Cys84, Cys159, Cys163, and Cys166 each coordinate [4Fe-4S] cluster. A Radical SAM core domain is found at 145–378 (AKRGPTAFLT…LTRQQREVQD (234 aa)). One can recognise a TRAM domain in the interval 378–440 (DSMVGRELGV…ANSLAGELID (63 aa)).

The protein belongs to the methylthiotransferase family. MiaB subfamily. As to quaternary structure, monomer. Requires [4Fe-4S] cluster as cofactor.

Its subcellular location is the cytoplasm. It catalyses the reaction N(6)-dimethylallyladenosine(37) in tRNA + (sulfur carrier)-SH + AH2 + 2 S-adenosyl-L-methionine = 2-methylsulfanyl-N(6)-dimethylallyladenosine(37) in tRNA + (sulfur carrier)-H + 5'-deoxyadenosine + L-methionine + A + S-adenosyl-L-homocysteine + 2 H(+). In terms of biological role, catalyzes the methylthiolation of N6-(dimethylallyl)adenosine (i(6)A), leading to the formation of 2-methylthio-N6-(dimethylallyl)adenosine (ms(2)i(6)A) at position 37 in tRNAs that read codons beginning with uridine. The chain is tRNA-2-methylthio-N(6)-dimethylallyladenosine synthase from Ruegeria sp. (strain TM1040) (Silicibacter sp.).